Here is a 711-residue protein sequence, read N- to C-terminus: Polyribonucleotide nucleotidyltransferase (711 aa).

Residues D490 and D496 each coordinate Mg(2+). The 60-residue stretch at 556–615 (PRIETMQVPTDKIREVIGSGGKVIREIVEVSGAKVDINDDGVIKIASANGEAIQKAYDMI) folds into the KH domain. The S1 motif domain maps to 625–693 (GAVYTGKVVK…DRGKVRLSMK (69 aa)).

It belongs to the polyribonucleotide nucleotidyltransferase family. Mg(2+) serves as cofactor.

It is found in the cytoplasm. The catalysed reaction is RNA(n+1) + phosphate = RNA(n) + a ribonucleoside 5'-diphosphate. Involved in mRNA degradation. Catalyzes the phosphorolysis of single-stranded polyribonucleotides processively in the 3'- to 5'-direction. This chain is Polyribonucleotide nucleotidyltransferase, found in Ruegeria sp. (strain TM1040) (Silicibacter sp.).